We begin with the raw amino-acid sequence, 1946 residues long: 1,3-beta-glucan synthase component (1946 aa).

2 disordered regions span residues 1–127 (MSGY…FSDF) and 152–198 (YGEG…KEPY). Composition is skewed to low complexity over residues 24 to 34 (GYYQDDQYYDQ), 43 to 60 (GDHAAQGDHGAQGTQGDG), and 91 to 109 (DDYYNNNQGYYDGEYNQGY). The segment covering 165 to 180 (QLSYGGNRSSGASTPN) has biased composition (polar residues). N-linked (GlcNAc...) asparagine glycosylation is found at Asn-171 and Asn-290. The interval 297-316 (KRKAKKGKKKGGEAGNEAET) is disordered. The next 6 membrane-spanning stretches (helical) occupy residues 489-509 (WFHLLLNFNRIWVIHLTMFWF), 537-557 (FSIVGFGGAIASLIQIFATLA), 576-596 (LLFLIVILVLNVAPGVKVFMF), 618-638 (IGIVHFVIAVFTFLFFSVMPL), 675-695 (FGLWLTVFGAKFGESYVYLTL), and 734-754 (IVLILMTFTDLIFFFLDTYLF). N-linked (GlcNAc...) asparagine glycosylation is found at Asn-1017 and Asn-1312. A run of 5 helical transmembrane segments spans residues 1356-1376 (NMFIMLSVQSFMLTLMSIGAL), 1413-1433 (CIISIFFVFFISFVPLIVQEL), 1500-1520 (FAGQSIYFGARLLMMLLFATS), 1523-1543 (WQPALTYFWIVLLGLIISPFL), and 1615-1635 (IFLTEILTPLLLAATTTVAYL). An N-linked (GlcNAc...) asparagine glycan is attached at Asn-1649. 5 helical membrane-spanning segments follow: residues 1667–1687 (LAVVAFAPIGINAGVLAAMFG), 1703–1723 (FGPVLAGIAHGAAAVFMIIFF), 1738–1758 (LAGIIAAMCIQRFIFKLIVSL), 1803–1823 (FSADFILGHWILFMMAPLILI), and 1864–1884 (AILYFVLFIIFLALVVAPGVI). Residue Asn-1918 is glycosylated (N-linked (GlcNAc...) asparagine). Residues 1920-1946 (TEGKTETGTKAGGADASATDASKLRLF) are disordered. A compositionally biased stretch (low complexity) spans 1925 to 1940 (ETGTKAGGADASATDA).

This sequence belongs to the glycosyltransferase 48 family. Component of the 1,3-beta-glucan synthase (GS) complex composed of a catalytic subunit GLS1 and a regulatory subunit RHO1.

The protein localises to the membrane. It is found in the cell membrane. The enzyme catalyses [(1-&gt;3)-beta-D-glucosyl](n) + UDP-alpha-D-glucose = [(1-&gt;3)-beta-D-glucosyl](n+1) + UDP + H(+). With respect to regulation, activated by iron ions. Inhibited by manganese, copper and zinc ions. In terms of biological role, catalytic subunit of the 1,3-beta-glucan synthase (GS). Synthesizes 1,3-beta-glucan, a major structural component of the fungal cell wall. Involved in cell wall synthesis, maintenance and remodeling. This chain is 1,3-beta-glucan synthase component, found in Cordyceps militaris (strain CM01) (Caterpillar fungus).